Here is a 567-residue protein sequence, read N- to C-terminus: Phenylalanine--tRNA ligase beta subunit (567 aa).

Residues 287–362 (YFQEEVEFNV…IGEGLASFHP (76 aa)) form the B5 domain. Residues Asp340, Asp346, Glu349, and Asp350 each contribute to the Mg(2+) site.

It belongs to the phenylalanyl-tRNA synthetase beta subunit family. Type 2 subfamily. In terms of assembly, tetramer of two alpha and two beta subunits. The cofactor is Mg(2+).

It localises to the cytoplasm. The catalysed reaction is tRNA(Phe) + L-phenylalanine + ATP = L-phenylalanyl-tRNA(Phe) + AMP + diphosphate + H(+). The polypeptide is Phenylalanine--tRNA ligase beta subunit (Borreliella afzelii (strain PKo) (Borrelia afzelii)).